A 312-amino-acid polypeptide reads, in one-letter code: HTH-type transcriptional regulator PtxR (312 aa).

The HTH lysR-type domain maps to 11–68 (LNLNHLYAFVAVAEHNSFTAAAEALGLSKSLLSEQLRRLEADLGIQLLTRTTRRMTLT). The H-T-H motif DNA-binding region spans 28-47 (FTAAAEALGLSKSLLSEQLR).

This sequence belongs to the LysR transcriptional regulatory family. As to quaternary structure, monomer in solution. May dimerize on binding to DNA. Interacts with PtxS in the absence of 2-ketogluconate. Binding of the 2-ketogluconate effector to PtxS causes PtxS/PtxR complex dissociation.

Its activity is regulated as follows. Negatively regulated by PtxS, which interacts with PtxR and prevents its activity. Its function is as follows. Plays an important role in the regulation of the production of the virulence factor exotoxin A (toxA), via positive regulation of the transcription of the toxA gene. Acts by binding directly to the toxA promoter region. Besides toxA, PtxR modulates the expression of genes that code for the QS-controlled virulence factors. It negatively regulates the expression of the rhamnolipid and pyocyanine genes, through the autoinducer synthase RhlI, and the PQS synthesis operon pqsABCDE, while it positively regulates the expression of lasB through the autoinducer synthase LasI. Also positively regulates the expression of the exotoxin A regulatory protein (toxR or regA). In addition, is involved in the positive regulation of glucose metabolism via the regulation of the expression of the kgu and gad operons. Acts by binding directly to the promoter region of the kgu and gad operons. This chain is HTH-type transcriptional regulator PtxR, found in Pseudomonas aeruginosa (strain ATCC 15692 / DSM 22644 / CIP 104116 / JCM 14847 / LMG 12228 / 1C / PRS 101 / PAO1).